Here is a 105-residue protein sequence, read N- to C-terminus: uncharacterized protein (105 aa).

The helical transmembrane segment at 4–26 (TQILLILFVGILVTTPHDIFIII) threads the bilayer.

The protein localises to the membrane. This is an uncharacterized protein from Rickettsia conorii (strain ATCC VR-613 / Malish 7).